The sequence spans 202 residues: Pyridoxal 5'-phosphate synthase subunit PdxT (202 aa).

50-52 contacts L-glutamine; it reads GES. C82 (nucleophile) is an active-site residue. Residues R111 and 140 to 141 each bind L-glutamine; that span reads IR. Catalysis depends on charge relay system residues H176 and E178.

The protein belongs to the glutaminase PdxT/SNO family. In the presence of PdxS, forms a dodecamer of heterodimers. Only shows activity in the heterodimer.

It catalyses the reaction aldehydo-D-ribose 5-phosphate + D-glyceraldehyde 3-phosphate + L-glutamine = pyridoxal 5'-phosphate + L-glutamate + phosphate + 3 H2O + H(+). The catalysed reaction is L-glutamine + H2O = L-glutamate + NH4(+). It functions in the pathway cofactor biosynthesis; pyridoxal 5'-phosphate biosynthesis. In terms of biological role, catalyzes the hydrolysis of glutamine to glutamate and ammonia as part of the biosynthesis of pyridoxal 5'-phosphate. The resulting ammonia molecule is channeled to the active site of PdxS. This Streptomyces coelicolor (strain ATCC BAA-471 / A3(2) / M145) protein is Pyridoxal 5'-phosphate synthase subunit PdxT.